Here is a 100-residue protein sequence, read N- to C-terminus: Aspartyl/glutamyl-tRNA(Asn/Gln) amidotransferase subunit C (100 aa).

The protein belongs to the GatC family. As to quaternary structure, heterotrimer of A, B and C subunits.

It catalyses the reaction L-glutamyl-tRNA(Gln) + L-glutamine + ATP + H2O = L-glutaminyl-tRNA(Gln) + L-glutamate + ADP + phosphate + H(+). The enzyme catalyses L-aspartyl-tRNA(Asn) + L-glutamine + ATP + H2O = L-asparaginyl-tRNA(Asn) + L-glutamate + ADP + phosphate + 2 H(+). Allows the formation of correctly charged Asn-tRNA(Asn) or Gln-tRNA(Gln) through the transamidation of misacylated Asp-tRNA(Asn) or Glu-tRNA(Gln) in organisms which lack either or both of asparaginyl-tRNA or glutaminyl-tRNA synthetases. The reaction takes place in the presence of glutamine and ATP through an activated phospho-Asp-tRNA(Asn) or phospho-Glu-tRNA(Gln). This Dictyoglomus turgidum (strain DSM 6724 / Z-1310) protein is Aspartyl/glutamyl-tRNA(Asn/Gln) amidotransferase subunit C.